Reading from the N-terminus, the 634-residue chain is 1-deoxy-D-xylulose-5-phosphate synthase (634 aa).

Residues His-72 and 113 to 115 (GHS) each bind thiamine diphosphate. Asp-144 provides a ligand contact to Mg(2+). Thiamine diphosphate-binding positions include 145 to 146 (GA), Asn-173, Tyr-284, and Glu-367. Asn-173 is a Mg(2+) binding site.

The protein belongs to the transketolase family. DXPS subfamily. In terms of assembly, homodimer. Mg(2+) is required as a cofactor. Thiamine diphosphate serves as cofactor.

The enzyme catalyses D-glyceraldehyde 3-phosphate + pyruvate + H(+) = 1-deoxy-D-xylulose 5-phosphate + CO2. The protein operates within metabolic intermediate biosynthesis; 1-deoxy-D-xylulose 5-phosphate biosynthesis; 1-deoxy-D-xylulose 5-phosphate from D-glyceraldehyde 3-phosphate and pyruvate: step 1/1. Functionally, catalyzes the acyloin condensation reaction between C atoms 2 and 3 of pyruvate and glyceraldehyde 3-phosphate to yield 1-deoxy-D-xylulose-5-phosphate (DXP). In Listeria welshimeri serovar 6b (strain ATCC 35897 / DSM 20650 / CCUG 15529 / CIP 8149 / NCTC 11857 / SLCC 5334 / V8), this protein is 1-deoxy-D-xylulose-5-phosphate synthase.